Reading from the N-terminus, the 26-residue chain is Metallothionein (26 aa).

Over residues 1-14 (MGDCGCSGASSCNC) the composition is skewed to low complexity. The interval 1 to 26 (MGDCGCSGASSCNCGSGCSCSNCGSK) is disordered. Cu(+) is bound by residues C4, C6, C12, C14, C18, C20, and C23. Cys residues predominate over residues 15–26 (GSGCSCSNCGSK).

It belongs to the metallothionein superfamily. Type 8 family.

This Neurospora crassa (strain ATCC 24698 / 74-OR23-1A / CBS 708.71 / DSM 1257 / FGSC 987) protein is Metallothionein (cmt).